The sequence spans 110 residues: Iron-sulfur cluster assembly protein CyaY (110 aa).

This sequence belongs to the frataxin family.

Its function is as follows. Involved in iron-sulfur (Fe-S) cluster assembly. May act as a regulator of Fe-S biogenesis. This is Iron-sulfur cluster assembly protein CyaY from Ectopseudomonas mendocina (strain ymp) (Pseudomonas mendocina).